A 232-amino-acid polypeptide reads, in one-letter code: MLRSSIRLLYIRRTSPLLRSLSSSSSSSSSKRFDSAKPLFNSHRIISLPISTTGAKLSRSEHSMAASSEPKSLYDFTVKDAKGNDVDLSIYKGKVLLIVNVASQCGLTNSNYTELAQLYEKYKGHGFEILAFPCNQFGNQEPGTNEEIVQFACTRFKAEYPIFDKVDVNGDKAAPVYKFLKSSKGGLFGDGIKWNFAKFLVDKDGNVVDRFAPTTSPLSIEKDVKKLLGVTA.

The N-terminal 54 residues, 1-54 (MLRSSIRLLYIRRTSPLLRSLSSSSSSSSSKRFDSAKPLFNSHRIISLPISTTG), are a transit peptide targeting the mitochondrion. Cys105 is an active-site residue.

It belongs to the glutathione peroxidase family. As to expression, expressed at a low but detectable level in leaves, stems, and flowers, but at a higher level in siliques and even higher in roots. Predominantly expressed in seeds.

Its subcellular location is the mitochondrion. The enzyme catalyses a hydroperoxy polyunsaturated fatty acid + 2 glutathione = a hydroxy polyunsaturated fatty acid + glutathione disulfide + H2O. Functionally, protects cells and enzymes from oxidative damage, by catalyzing the reduction of hydrogen peroxide, lipid peroxides and organic hydroperoxide, by glutathione. This chain is Probable phospholipid hydroperoxide glutathione peroxidase 6, mitochondrial (GPX6), found in Arabidopsis thaliana (Mouse-ear cress).